The following is a 509-amino-acid chain: MQQDYCPDIAKLAEGGFNKVFILRAKNGREVIARIPTPIAGPAHYTTASEVATMDFLRAVLKLPVPEVFAYSTTSENPVGAEYILMERVEGESLSSRWLSLTTDEVKDIMIQIAEMERKIFDFRFPAYGSLYHTKDLDWKHQIPIVEDFVIGPVSSREFWHGERSKTEIDRGPCRVSPLSTFPFILGFLEKEPTGTGLIIAVGLSPLDCVTSAARREMAVIQRHAKPQPRQTFLLPTNYNIHPSEHTSLLSQFLQVAPHLIRPGSYSAPTLRHPDLSLSNILLAPGTSKIISIIDWQGATILPRFMQAGYPAFCHHDSSQPQSLEIPSLPDDFDKMGIDEQRQIKAIFRLEEANLYYTAATGVHNEEHMNVLKIPHLGMQQYLLRQTGYPWDADVINLRAALVGITTPSVWSKISSAACPVEFSEEEREAAIAESQEWNESEQLLSRVREHLNIDLEGGTEPDNFERAVEGNRQLRIEMVRQAEAGQQEICWRNWPYKDQEDNSMPPQR.

Its function is as follows. Part of the subtelomeric hrmA-associated cluster (HAC) containing genes that alter the hyphal surface (such as reduced total chitin or increased beta-glucan exposure) and perturb inter-hyphal interactions within the developing biofilms, resulting in a loss of vertically aligned polarized growing filaments. Consequently, this hypoxia-typic morphotype (called H-MORPH) with altered biofilm architecture leads to increased hypoxia fitness, increased host inflammation, rapid disease progression, and mortality in a murine model of invasive aspergillosis. This is Subtelomeric hrmA-associated cluster protein AFUA_5G14880 from Aspergillus fumigatus (strain ATCC MYA-4609 / CBS 101355 / FGSC A1100 / Af293) (Neosartorya fumigata).